The primary structure comprises 227 residues: YEATS domain-containing protein 4 (227 aa).

The region spanning 15–158 (RVKGVTIVKP…AMMQQLLTTS (144 aa)) is the YEATS domain. Lys37 is covalently cross-linked (Glycyl lysine isopeptide (Lys-Gly) (interchain with G-Cter in SUMO2)). The diacetylated histone H3 binding stretch occupies residues 93–97 (WGEFE). Residues 163 to 227 (LGAYKHETEF…LEEDDQAKDI (65 aa)) are interaction with MLLT10. The interaction with TACC1 stretch occupies residues 168-227 (HETEFAELEVKTREKLEAAKKKTSFEIAELKERLKASRETINCLKNEIRKLEEDDQAKDI). Positions 178–226 (KTREKLEAAKKKTSFEIAELKERLKASRETINCLKNEIRKLEEDDQAKD) form a coiled coil.

As to quaternary structure, component of numerous complexes with chromatin remodeling and histone acetyltransferase activity. Component of the NuA4 histone acetyltransferase complex which contains the catalytic subunit KAT5/TIP60 and the subunits EP400, TRRAP/PAF400, BRD8/SMAP, EPC1, DMAP1/DNMAP1, RUVBL1/TIP49, RUVBL2, ING3, actin, ACTL6A/BAF53A, MORF4L1/MRG15, MORF4L2/MRGX, MRGBP, YEATS4/GAS41, VPS72/YL1 and MEAF6. The NuA4 complex interacts with MYC and the adenovirus E1A protein. Component of a NuA4-related complex which contains EP400, TRRAP/PAF400, SRCAP, BRD8/SMAP, EPC1, DMAP1/DNMAP1, RUVBL1/TIP49, RUVBL2, actin, ACTL6A/BAF53A, VPS72 and YEATS4/GAS41. Interacts with MLLT10/AF10. Also interacts with the SWI/SNF component SMARCB1/BAF47, TACC1 and TACC2, and the nuclear matrix protein NUMA1. Expressed in brain, heart, kidney, liver, lung, pancreas, placenta and skeletal muscle.

Its subcellular location is the nucleus. Its function is as follows. Chromatin reader component of the NuA4 histone acetyltransferase (HAT) complex, a complex involved in transcriptional activation of select genes principally by acetylation of nucleosomal histones H4 and H2A. Specifically recognizes and binds acylated histone H3, with a preference for histone H3 diacetylated at 'Lys-18' and 'Lys-27' (H3K18ac and H3K27ac) or histone H3 diacetylated at 'Lys-14' and 'Lys-27' (H3K14ac and H3K27ac). Also able to recognize and bind crotonylated histone H3. May also recognize and bind histone H3 succinylated at 'Lys-122' (H3K122succ); additional evidences are however required to confirm this result in vivo. Plays a key role in histone variant H2AZ1/H2A.Z deposition into specific chromatin regions: recognizes and binds H3K14ac and H3K27ac on the promoters of actively transcribed genes and recruits NuA4-related complex to deposit H2AZ1/H2A.Z. H2AZ1/H2A.Z deposition is required for maintenance of embryonic stem cell. The polypeptide is YEATS domain-containing protein 4 (Homo sapiens (Human)).